The following is a 110-amino-acid chain: Large ribosomal subunit protein uL22 (110 aa).

It belongs to the universal ribosomal protein uL22 family. In terms of assembly, part of the 50S ribosomal subunit.

Its function is as follows. This protein binds specifically to 23S rRNA; its binding is stimulated by other ribosomal proteins, e.g. L4, L17, and L20. It is important during the early stages of 50S assembly. It makes multiple contacts with different domains of the 23S rRNA in the assembled 50S subunit and ribosome. Functionally, the globular domain of the protein is located near the polypeptide exit tunnel on the outside of the subunit, while an extended beta-hairpin is found that lines the wall of the exit tunnel in the center of the 70S ribosome. The protein is Large ribosomal subunit protein uL22 of Aggregatibacter actinomycetemcomitans (Actinobacillus actinomycetemcomitans).